The following is a 98-amino-acid chain: Acylphosphatase-1 (98 aa).

The region spanning 8 to 98 (SVDYEVFGKV…LEHSTFSICK (91 aa)) is the Acylphosphatase-like domain. Active-site residues include R23 and N41.

Belongs to the acylphosphatase family.

It catalyses the reaction an acyl phosphate + H2O = a carboxylate + phosphate + H(+). The chain is Acylphosphatase-1 (acyp1) from Xenopus tropicalis (Western clawed frog).